Consider the following 187-residue polypeptide: MAPAVVGASQLRGGDSPGPARNRDHCLNRSEVYALTREAINKRKHLGDVKGVCAHLFDDSFSAQSDYIRENLATAFIVVGDNCRERKHLGQHAARFDRVFSLKRRTLYDEYHASAGRYGDTKPCRKRRFSRAAQVRDQPAQQERLGDQSVQDSPLRKEKDLVPHQGVGGVRPGQENGQARQEEQSQQ.

2 disordered regions span residues 1–24 and 119–187; these read MAPAVVGASQLRGGDSPGPARNRD and GDTK…QSQQ.

It belongs to the baculoviridae LEF-11 family.

Functionally, involved in late/very late gene activation. The sequence is that of Late expression factor 11 (LEF-11) from Lymantria dispar multicapsid nuclear polyhedrosis virus (LdMNPV).